The chain runs to 274 residues: Bis(5'-nucleosyl)-tetraphosphatase, symmetrical (274 aa).

Belongs to the Ap4A hydrolase family.

The catalysed reaction is P(1),P(4)-bis(5'-adenosyl) tetraphosphate + H2O = 2 ADP + 2 H(+). Hydrolyzes diadenosine 5',5'''-P1,P4-tetraphosphate to yield ADP. The protein is Bis(5'-nucleosyl)-tetraphosphatase, symmetrical of Shewanella loihica (strain ATCC BAA-1088 / PV-4).